Here is a 120-residue protein sequence, read N- to C-terminus: Aspartate 1-decarboxylase (120 aa).

Serine 25 acts as the Schiff-base intermediate with substrate; via pyruvic acid in catalysis. Residue serine 25 is modified to Pyruvic acid (Ser). Threonine 57 is a binding site for substrate. The Proton donor role is filled by tyrosine 58. 73–75 (GAA) contributes to the substrate binding site.

This sequence belongs to the PanD family. In terms of assembly, heterooctamer of four alpha and four beta subunits. The cofactor is pyruvate. In terms of processing, is synthesized initially as an inactive proenzyme, which is activated by self-cleavage at a specific serine bond to produce a beta-subunit with a hydroxyl group at its C-terminus and an alpha-subunit with a pyruvoyl group at its N-terminus.

It localises to the cytoplasm. The enzyme catalyses L-aspartate + H(+) = beta-alanine + CO2. It participates in cofactor biosynthesis; (R)-pantothenate biosynthesis; beta-alanine from L-aspartate: step 1/1. Catalyzes the pyruvoyl-dependent decarboxylation of aspartate to produce beta-alanine. This chain is Aspartate 1-decarboxylase, found in Cupriavidus necator (strain ATCC 17699 / DSM 428 / KCTC 22496 / NCIMB 10442 / H16 / Stanier 337) (Ralstonia eutropha).